The primary structure comprises 120 residues: MEGLRRGLSRWKRYHIKVHLADEALLLPLTVRPRDTLSDLRAQLVGQGVSSWKRAFYYNARRLDDHQTVRDARLQDGSVLLLVSDPSEAQRLTPAIPALWEAEASRSLESRSSRPAWPTW.

One can recognise a Ubiquitin-like domain in the interval 14-83; it reads YHIKVHLADE…LQDGSVLLLV (70 aa).

As to expression, detected in stratum corneum (at protein level).

This Homo sapiens (Human) protein is Ubiquitin domain-containing protein TINCR.